The following is a 182-amino-acid chain: MRRLFLSHVLGAWLLLSQLPRELSGQKPDDVIKACGRELARLRIEICGSLSWKKTVLRLEEPGLEAGQPVEIVSSSISKDAEALNTKLGLNSNLPKEQKATLSERQPSWRELLQQPALKDSNLNLEEFEETILKTQSEVEDDSLSELKNLGLDKHSRKKRMIQLSHKCCYWGCTRKELARQC.

Residues 1 to 25 form the signal peptide; it reads MRRLFLSHVLGAWLLLSQLPRELSG. Residue glutamine 26 is modified to Pyrrolidone carboxylic acid. Intrachain disulfides connect cysteine 35-cysteine 169, cysteine 47-cysteine 182, and cysteine 168-cysteine 173. Positions 54–156 are cleaved as a propeptide — connecting peptide; sequence KTVLRLEEPG…LKNLGLDKHS (103 aa). Positions 161 to 162 are excised as a propeptide; the sequence is MI. At glutamine 163 the chain carries Pyrrolidone carboxylic acid.

This sequence belongs to the insulin family. Heterodimer of a B chain and an A chain linked by two disulfide bonds.

It localises to the secreted. Its function is as follows. Relaxin is an ovarian hormone that acts with estrogen to produce dilatation of the birth canal in many mammals. This chain is Prorelaxin (RLN), found in Equus caballus (Horse).